A 247-amino-acid polypeptide reads, in one-letter code: MNVLPCSINTLKGLYDISGVEVGQHLYWQIGGFQVHGQVLITSWVVIAILLGSVTIAVRNPQTIPTNSQNFFEYVLEFIRDLSKTQIGEDYGPWVPFIGTMFLFIFVSNWSGALFPWKIIQLPHGELAAPTNDINTTVALALPTSVAYFYAGLTKKGLGYFSKYIQPTPILLPINVLEDFTKPLSLSFRLFGNILADELVVVVLVSLVPSVVPIPVMFLGLFTSGIQALIFATLAAAYIGESMEGHH.

A run of 5 helical transmembrane segments spans residues 38-58 (QVLI…TIAV), 95-115 (VPFI…GALF), 134-154 (INTT…AGLT), 199-219 (LVVV…VMFL), and 220-240 (GLFT…AYIG).

This sequence belongs to the ATPase A chain family. F-type ATPases have 2 components, CF(1) - the catalytic core - and CF(0) - the membrane proton channel. CF(1) has five subunits: alpha(3), beta(3), gamma(1), delta(1), epsilon(1). CF(0) has four main subunits: a, b, b' and c.

It is found in the plastid. It localises to the chloroplast thylakoid membrane. Its function is as follows. Key component of the proton channel; it plays a direct role in the translocation of protons across the membrane. The protein is ATP synthase subunit a, chloroplastic of Piper cenocladum (Ant piper).